The following is a 75-amino-acid chain: MANKPFFRRRKVCPFSGDNAPAIDYKDTRLLQRYISERGKIVPSRITAVSAKKQRELAAAIKRARFLALLPYAVK.

It belongs to the bacterial ribosomal protein bS18 family. Part of the 30S ribosomal subunit. Forms a tight heterodimer with protein bS6.

Its function is as follows. Binds as a heterodimer with protein bS6 to the central domain of the 16S rRNA, where it helps stabilize the platform of the 30S subunit. This is Small ribosomal subunit protein bS18 from Cereibacter sphaeroides (strain ATCC 17029 / ATH 2.4.9) (Rhodobacter sphaeroides).